The chain runs to 85 residues: Small ribosomal subunit protein bS16 (85 aa).

This sequence belongs to the bacterial ribosomal protein bS16 family.

The protein is Small ribosomal subunit protein bS16 of Pseudomonas savastanoi pv. phaseolicola (strain 1448A / Race 6) (Pseudomonas syringae pv. phaseolicola (strain 1448A / Race 6)).